A 574-amino-acid chain; its full sequence is Proline--tRNA ligase (574 aa).

Belongs to the class-II aminoacyl-tRNA synthetase family. ProS type 1 subfamily. In terms of assembly, homodimer.

It is found in the cytoplasm. The enzyme catalyses tRNA(Pro) + L-proline + ATP = L-prolyl-tRNA(Pro) + AMP + diphosphate. Functionally, catalyzes the attachment of proline to tRNA(Pro) in a two-step reaction: proline is first activated by ATP to form Pro-AMP and then transferred to the acceptor end of tRNA(Pro). As ProRS can inadvertently accommodate and process non-cognate amino acids such as alanine and cysteine, to avoid such errors it has two additional distinct editing activities against alanine. One activity is designated as 'pretransfer' editing and involves the tRNA(Pro)-independent hydrolysis of activated Ala-AMP. The other activity is designated 'posttransfer' editing and involves deacylation of mischarged Ala-tRNA(Pro). The misacylated Cys-tRNA(Pro) is not edited by ProRS. The protein is Proline--tRNA ligase of Sodalis glossinidius (strain morsitans).